The sequence spans 465 residues: uncharacterized protein (465 aa).

Positions M1–S50 constitute a TRAM domain. Residues C63, C69, C72, and C168 each contribute to the [4Fe-4S] cluster site. 4 residues coordinate S-adenosyl-L-methionine: Q293, Y322, E343, and D392. C419 serves as the catalytic Nucleophile.

It belongs to the class I-like SAM-binding methyltransferase superfamily. RNA M5U methyltransferase family.

This is an uncharacterized protein from Porphyromonas gingivalis (strain ATCC BAA-308 / W83).